A 388-amino-acid polypeptide reads, in one-letter code: 1-deoxy-D-xylulose 5-phosphate reductoisomerase (388 aa).

Positions 15, 16, 17, 18, and 127 each coordinate NADPH. Residue K128 coordinates 1-deoxy-D-xylulose 5-phosphate. E129 is a binding site for NADPH. A Mn(2+)-binding site is contributed by D153. Residues S154, E155, S179, and H202 each contribute to the 1-deoxy-D-xylulose 5-phosphate site. E155 lines the Mn(2+) pocket. An NADPH-binding site is contributed by G208. Positions 215, 220, 221, and 224 each coordinate 1-deoxy-D-xylulose 5-phosphate. E224 contributes to the Mn(2+) binding site.

This sequence belongs to the DXR family. Mg(2+) serves as cofactor. It depends on Mn(2+) as a cofactor.

It catalyses the reaction 2-C-methyl-D-erythritol 4-phosphate + NADP(+) = 1-deoxy-D-xylulose 5-phosphate + NADPH + H(+). The protein operates within isoprenoid biosynthesis; isopentenyl diphosphate biosynthesis via DXP pathway; isopentenyl diphosphate from 1-deoxy-D-xylulose 5-phosphate: step 1/6. Its function is as follows. Catalyzes the NADPH-dependent rearrangement and reduction of 1-deoxy-D-xylulose-5-phosphate (DXP) to 2-C-methyl-D-erythritol 4-phosphate (MEP). The chain is 1-deoxy-D-xylulose 5-phosphate reductoisomerase from Bacteroides fragilis (strain ATCC 25285 / DSM 2151 / CCUG 4856 / JCM 11019 / LMG 10263 / NCTC 9343 / Onslow / VPI 2553 / EN-2).